Consider the following 493-residue polypeptide: Protein translocase subunit SecY (493 aa).

At 1–21 (MDSVIRALQPYFERIPSVERP) the chain is on the cytoplasmic side. Residues 22–48 (KGHVHFREKFGWTAAILLLYFILSNVP) traverse the membrane as a helical segment. Over 49 to 59 (VFGLSPESIDI) the chain is Extracellular. Positions 60–67 (FAAYRALF) form an intramembrane region, helical. A discontinuously helical transmembrane segment spans residues 60–88 (FAAYRALFAGSTGSIIALGIGPIVTASII). The stretch at 68–79 (AGSTGSIIALGI) is an intramembrane region. The helical intramembrane region spans 80–88 (GPIVTASII). Over 89 to 109 (LQLLVGAGIIKLDLTNPEDRA) the chain is Cytoplasmic. The chain crosses the membrane as a helical span at residues 110-134 (AYQDFQRFLVFVMIAVEAIPQIAGG). At 135 to 151 (LLKPDLNLAAQLGVSPG) the chain is on the extracellular side. A helical membrane pass occupies residues 152 to 176 (IISFLIFIQLFIGGVLIVYMDEVVS). Over 177–182 (KWGIGS) the chain is Cytoplasmic. The chain crosses the membrane as a helical span at residues 183-201 (GVSLFILAGIAQSIVVGLF). At 202–244 (NWVIPPNSAMPAGIIPRWIWIAQNYPLDQLFTGSGLAFLLIQG) the chain is on the extracellular side. Residues 245–266 (GILALITTAAIILLVVFFEGTR) form a helical membrane-spanning segment. The Cytoplasmic portion of the chain corresponds to 267 to 291 (VEIPLAHAVARGARGRFPIKLIYAS). The helical transmembrane segment at 292 to 313 (VLPMIFVRALQANVVALGQVLH) threads the bilayer. Over 314–367 (ARGVTIFGEFVNGKAVSGLMFFLQPVSSPYDWIPSLVKSQGAAFAAIPDWMIYL) the chain is Extracellular. A helical transmembrane segment spans residues 368 to 387 (HLLIDALILVVGGIIFAWFW). Residues 388–430 (VETSGMDARTVASQIAKSGMQVPGFRKSPQVLERVLSRYIPKV) lie on the Cytoplasmic side of the membrane. Residues 431–449 (TILGGAIIGILTLVANMLG) form a helical membrane-spanning segment. Over 450–454 (TIGNV) the chain is Extracellular. The chain crosses the membrane as a helical span at residues 455-469 (SGTGLLLAVSIAYRF). Over 470-493 (YEDLAKEQLTEMHPLIRRMLGEEA) the chain is Cytoplasmic.

This sequence belongs to the SecY/SEC61-alpha family. In terms of assembly, component of the Sec protein translocase complex. Heterotrimer consisting of alpha (SecY), beta (SecG) and gamma (SecE) subunits. The heterotrimers can form oligomers, although 1 heterotrimer is thought to be able to translocate proteins. Interacts with the ribosome. May interact with SecDF, and other proteins may be involved.

It localises to the cell membrane. In terms of biological role, the central subunit of the protein translocation channel SecYEG. Consists of two halves formed by TMs 1-5 and 6-10. These two domains form a lateral gate at the front which open onto the bilayer between TMs 2 and 7, and are clamped together by SecE at the back. The channel is closed by both a pore ring composed of hydrophobic SecY resides and a short helix (helix 2A) on the extracellular side of the membrane which forms a plug. The plug probably moves laterally to allow the channel to open. The ring and the pore may move independently. In Archaeoglobus fulgidus (strain ATCC 49558 / DSM 4304 / JCM 9628 / NBRC 100126 / VC-16), this protein is Protein translocase subunit SecY.